A 365-amino-acid chain; its full sequence is Aminomethyltransferase (365 aa).

This sequence belongs to the GcvT family. In terms of assembly, the glycine cleavage system is composed of four proteins: P, T, L and H.

It catalyses the reaction N(6)-[(R)-S(8)-aminomethyldihydrolipoyl]-L-lysyl-[protein] + (6S)-5,6,7,8-tetrahydrofolate = N(6)-[(R)-dihydrolipoyl]-L-lysyl-[protein] + (6R)-5,10-methylene-5,6,7,8-tetrahydrofolate + NH4(+). In terms of biological role, the glycine cleavage system catalyzes the degradation of glycine. The protein is Aminomethyltransferase of Chlorobium phaeovibrioides (strain DSM 265 / 1930) (Prosthecochloris vibrioformis (strain DSM 265)).